A 196-amino-acid chain; its full sequence is Phosphoheptose isomerase (196 aa).

The SIS domain occupies 36–196 (MVACLMNEGK…AVDYMLLGGD (161 aa)). 51–53 (NGG) contributes to the substrate binding site. Residues histidine 60 and glutamate 64 each coordinate Zn(2+). Residues glutamate 64, 93–94 (ND), 119–121 (STS), serine 124, and glutamine 174 each bind substrate. Zn(2+)-binding residues include glutamine 174 and histidine 182.

Belongs to the SIS family. GmhA subfamily. Homotetramer. It depends on Zn(2+) as a cofactor.

The protein resides in the cytoplasm. The catalysed reaction is 2 D-sedoheptulose 7-phosphate = D-glycero-alpha-D-manno-heptose 7-phosphate + D-glycero-beta-D-manno-heptose 7-phosphate. It participates in carbohydrate biosynthesis; D-glycero-D-manno-heptose 7-phosphate biosynthesis; D-glycero-alpha-D-manno-heptose 7-phosphate and D-glycero-beta-D-manno-heptose 7-phosphate from sedoheptulose 7-phosphate: step 1/1. Its function is as follows. Catalyzes the isomerization of sedoheptulose 7-phosphate in D-glycero-D-manno-heptose 7-phosphate. The sequence is that of Phosphoheptose isomerase from Laribacter hongkongensis (strain HLHK9).